We begin with the raw amino-acid sequence, 83 residues long: High-potential iron-sulfur protein (83 aa).

4 residues coordinate [4Fe-4S] cluster: cysteine 43, cysteine 46, cysteine 61, and cysteine 75.

Belongs to the high-potential iron-sulfur protein (HiPIP) family. As to quaternary structure, homodimer.

The protein localises to the periplasm. Its function is as follows. Specific class of high-redox-potential 4Fe-4S ferredoxins. Functions in anaerobic electron transport in most purple and in some other photosynthetic bacteria and in at least one genus (Paracoccus) of halophilic, denitrifying bacteria. The chain is High-potential iron-sulfur protein from Isochromatium buderi (Chromatium buderi).